We begin with the raw amino-acid sequence, 347 residues long: MSKKIKVGIVGATGYTGVELLRLLAAHPDVEVAAVTSRSEAGTAVADYFPSLRGVYGLAFQTPDEAGLEQCDIVFFATPNGIAMKDAPRLIEQGVRVIDLSADFRIWDIPTWEHWYGMPHAAPGLVSQAVYGLSELNREAVAQARLVANPGCYPTCVSLPLVPLLRQCRLKPGMPLIADCKSGVSGAGRKGNVGSLLCEVGDNFKAYGIAGHRHLPEIRQTIAGLQDGIAEGFVFTPHLAPMIRGMHATVYLHLSDGICPETILRDYYRDSLFVDILPAGSTPETRSVRGANLCRISIQQAAQSDVWVVLSVIDNLVKGAAGQAVQNMNIMFGLKETHGLGAIPLLP.

The active site involves Cys-152.

This sequence belongs to the NAGSA dehydrogenase family. Type 1 subfamily.

Its subcellular location is the cytoplasm. It carries out the reaction N-acetyl-L-glutamate 5-semialdehyde + phosphate + NADP(+) = N-acetyl-L-glutamyl 5-phosphate + NADPH + H(+). The protein operates within amino-acid biosynthesis; L-arginine biosynthesis; N(2)-acetyl-L-ornithine from L-glutamate: step 3/4. Functionally, catalyzes the NADPH-dependent reduction of N-acetyl-5-glutamyl phosphate to yield N-acetyl-L-glutamate 5-semialdehyde. In Neisseria meningitidis serogroup C / serotype 2a (strain ATCC 700532 / DSM 15464 / FAM18), this protein is N-acetyl-gamma-glutamyl-phosphate reductase.